Reading from the N-terminus, the 360-residue chain is UDP-N-acetylglucosamine--N-acetylmuramyl-(pentapeptide) pyrophosphoryl-undecaprenol N-acetylglucosamine transferase (360 aa).

Residues 15–17 (TGG), asparagine 128, arginine 164, serine 192, isoleucine 247, and glutamine 292 each bind UDP-N-acetyl-alpha-D-glucosamine.

The protein belongs to the glycosyltransferase 28 family. MurG subfamily.

The protein resides in the cell inner membrane. The catalysed reaction is di-trans,octa-cis-undecaprenyl diphospho-N-acetyl-alpha-D-muramoyl-L-alanyl-D-glutamyl-meso-2,6-diaminopimeloyl-D-alanyl-D-alanine + UDP-N-acetyl-alpha-D-glucosamine = di-trans,octa-cis-undecaprenyl diphospho-[N-acetyl-alpha-D-glucosaminyl-(1-&gt;4)]-N-acetyl-alpha-D-muramoyl-L-alanyl-D-glutamyl-meso-2,6-diaminopimeloyl-D-alanyl-D-alanine + UDP + H(+). Its pathway is cell wall biogenesis; peptidoglycan biosynthesis. In terms of biological role, cell wall formation. Catalyzes the transfer of a GlcNAc subunit on undecaprenyl-pyrophosphoryl-MurNAc-pentapeptide (lipid intermediate I) to form undecaprenyl-pyrophosphoryl-MurNAc-(pentapeptide)GlcNAc (lipid intermediate II). The sequence is that of UDP-N-acetylglucosamine--N-acetylmuramyl-(pentapeptide) pyrophosphoryl-undecaprenol N-acetylglucosamine transferase from Blochmanniella floridana.